A 308-amino-acid polypeptide reads, in one-letter code: Methionyl-tRNA formyltransferase (308 aa).

Residue 107 to 110 participates in (6S)-5,6,7,8-tetrahydrofolate binding; that stretch reads SLLP.

It belongs to the Fmt family.

The catalysed reaction is L-methionyl-tRNA(fMet) + (6R)-10-formyltetrahydrofolate = N-formyl-L-methionyl-tRNA(fMet) + (6S)-5,6,7,8-tetrahydrofolate + H(+). Its function is as follows. Attaches a formyl group to the free amino group of methionyl-tRNA(fMet). The formyl group appears to play a dual role in the initiator identity of N-formylmethionyl-tRNA by promoting its recognition by IF2 and preventing the misappropriation of this tRNA by the elongation apparatus. The polypeptide is Methionyl-tRNA formyltransferase (Carboxydothermus hydrogenoformans (strain ATCC BAA-161 / DSM 6008 / Z-2901)).